A 236-amino-acid chain; its full sequence is UPF0173 metal-dependent hydrolase AZC_2841 (236 aa).

Belongs to the UPF0173 family.

The polypeptide is UPF0173 metal-dependent hydrolase AZC_2841 (Azorhizobium caulinodans (strain ATCC 43989 / DSM 5975 / JCM 20966 / LMG 6465 / NBRC 14845 / NCIMB 13405 / ORS 571)).